We begin with the raw amino-acid sequence, 383 residues long: Aliphatic nitrilase (383 aa).

Positions 13-288 (VKVATVQAEP…EGLLYAELDL (276 aa)) constitute a CN hydrolase domain. The Proton acceptor role is filled by Glu53. The active-site Proton donor is the Lys136. The Nucleophile role is filled by Cys170. A disordered region spans residues 359–383 (ATLPLDAPAPAPAPEQKSGRAKAEA).

It belongs to the carbon-nitrogen hydrolase superfamily. Nitrilase family.

The enzyme catalyses an aliphatic nitrile + 2 H2O = a carboxylate + NH4(+). In terms of biological role, acts on aliphatic nitriles such as acrylonitrile, crotononitrile and glutaronitrile. The protein is Aliphatic nitrilase of Rhodococcus rhodochrous.